A 376-amino-acid chain; its full sequence is Succinyl-diaminopimelate desuccinylase (376 aa).

Histidine 66 serves as a coordination point for Zn(2+). Aspartate 68 is an active-site residue. Aspartate 99 is a Zn(2+) binding site. Glutamate 133 acts as the Proton acceptor in catalysis. Residues glutamate 134, glutamate 162, and histidine 349 each contribute to the Zn(2+) site.

The protein belongs to the peptidase M20A family. DapE subfamily. In terms of assembly, homodimer. Zn(2+) serves as cofactor. Co(2+) is required as a cofactor.

The catalysed reaction is N-succinyl-(2S,6S)-2,6-diaminopimelate + H2O = (2S,6S)-2,6-diaminopimelate + succinate. It functions in the pathway amino-acid biosynthesis; L-lysine biosynthesis via DAP pathway; LL-2,6-diaminopimelate from (S)-tetrahydrodipicolinate (succinylase route): step 3/3. Catalyzes the hydrolysis of N-succinyl-L,L-diaminopimelic acid (SDAP), forming succinate and LL-2,6-diaminopimelate (DAP), an intermediate involved in the bacterial biosynthesis of lysine and meso-diaminopimelic acid, an essential component of bacterial cell walls. The chain is Succinyl-diaminopimelate desuccinylase from Vesicomyosocius okutanii subsp. Calyptogena okutanii (strain HA).